A 551-amino-acid chain; its full sequence is PA-phosphatase related-family protein DDB_G0268928 (551 aa).

Polar residues-rich tracts occupy residues 26–47 (TESL…SGKD) and 137–152 (KYNT…SSNK). 2 disordered regions span residues 26-50 (TESL…DYSS) and 123-172 (KGED…NNNN). Over residues 153-171 (TQTTVLNNSTTSSNNINNN) the composition is skewed to low complexity. 7 helical membrane passes run 211-231 (SYSD…SIIY), 232-252 (SLLV…LVFI), 273-293 (LAVG…AVVL), 346-366 (ILQL…IYIL), 393-413 (MFIC…LIFP), 474-494 (ILPA…IATM), and 500-520 (YFVD…YGGF).

Belongs to the PA-phosphatase related phosphoesterase family.

The protein localises to the membrane. The sequence is that of PA-phosphatase related-family protein DDB_G0268928 from Dictyostelium discoideum (Social amoeba).